The chain runs to 171 residues: PBAN-type neuropeptides (171 aa).

Residues 1–22 form the signal peptide; the sequence is MFRLYFFFNVICIFLAIRSAIG. The propeptide occupies 23–47; it reads GEVPDATEQKINNFLASGKDSEDLS. Residue Leu59 is modified to Leucine amide. The propeptide occupies 63-111; that stretch reads TIASELHDEMMDEIDDNPLYYSGESPQRVASEIAQGTPYVVLLLTGRVL. The tract at residues 120 to 151 is disordered; sequence HSTTPRLGRRDASSSNENNSRPPFAPRLGRNL. Leucine amide is present on residues Leu126, Leu147, and Leu157. Positions 160–171 are excised as a propeptide; that stretch reads SFGAPVVDNFAY.

The protein belongs to the pyrokinin family.

The protein resides in the secreted. Its function is as follows. A hormone that controls sex pheromone production in females and pheromone responsiveness in male. Also mediates visceral muscle contractile activity (myotropic activity). The chain is PBAN-type neuropeptides from Aedes aegypti (Yellowfever mosquito).